Consider the following 161-residue polypeptide: UPF0178 protein BR1979/BS1330_I1973 (161 aa).

The protein belongs to the UPF0178 family.

The protein is UPF0178 protein BR1979/BS1330_I1973 of Brucella suis biovar 1 (strain 1330).